Here is a 156-residue protein sequence, read N- to C-terminus: Flagellar assembly factor FliW (156 aa).

Belongs to the FliW family. In terms of assembly, interacts with translational regulator CsrA and flagellin(s).

The protein resides in the cytoplasm. In terms of biological role, acts as an anti-CsrA protein, binds CsrA and prevents it from repressing translation of its target genes, one of which is flagellin. Binds to flagellin and participates in the assembly of the flagellum. In Lachnoclostridium phytofermentans (strain ATCC 700394 / DSM 18823 / ISDg) (Clostridium phytofermentans), this protein is Flagellar assembly factor FliW.